The primary structure comprises 264 residues: Phosphatidylinositol transfer protein 1 (264 aa).

The segment at 151–174 (NYKETEDPTKIRSEKANRGPLEEE) is disordered. A coiled-coil region spans residues 238-264 (VRAFELKTKEDLKKKLEEKDENKAAEK).

The protein belongs to the PtdIns transfer protein family. PI transfer class I subfamily. In terms of processing, phosphorylated in response to activation of rasG.

It localises to the cytoplasm. Its subcellular location is the golgi apparatus. Catalyzes the transfer of PtdIns and phosphatidylcholine between membranes. In Dictyostelium discoideum (Social amoeba), this protein is Phosphatidylinositol transfer protein 1 (pitA).